A 146-amino-acid chain; its full sequence is Anti-sigma F factor (146 aa).

This sequence belongs to the anti-sigma-factor family.

It catalyses the reaction L-seryl-[protein] + ATP = O-phospho-L-seryl-[protein] + ADP + H(+). It carries out the reaction L-threonyl-[protein] + ATP = O-phospho-L-threonyl-[protein] + ADP + H(+). In terms of biological role, binds to sigma F and blocks its ability to form an RNA polymerase holoenzyme (E-sigma F). Phosphorylates SpoIIAA on a serine residue. This phosphorylation may enable SpoIIAA to act as an anti-anti-sigma factor that counteracts SpoIIAB and thus releases sigma F from inhibition. This is Anti-sigma F factor from Bacillus cereus (strain G9842).